Here is a 290-residue protein sequence, read N- to C-terminus: Ribosomal RNA small subunit methyltransferase A (290 aa).

Residues asparagine 27, leucine 29, glycine 54, glutamate 75, aspartate 100, and asparagine 125 each contribute to the S-adenosyl-L-methionine site.

The protein belongs to the class I-like SAM-binding methyltransferase superfamily. rRNA adenine N(6)-methyltransferase family. RsmA subfamily.

It is found in the cytoplasm. The catalysed reaction is adenosine(1518)/adenosine(1519) in 16S rRNA + 4 S-adenosyl-L-methionine = N(6)-dimethyladenosine(1518)/N(6)-dimethyladenosine(1519) in 16S rRNA + 4 S-adenosyl-L-homocysteine + 4 H(+). Functionally, specifically dimethylates two adjacent adenosines (A1518 and A1519) in the loop of a conserved hairpin near the 3'-end of 16S rRNA in the 30S particle. May play a critical role in biogenesis of 30S subunits. This chain is Ribosomal RNA small subunit methyltransferase A, found in Streptococcus pneumoniae (strain P1031).